The chain runs to 275 residues: NH(3)-dependent NAD(+) synthetase (275 aa).

46–53 (GISGGQDS) lines the ATP pocket. Position 52 (Asp52) interacts with Mg(2+). Deamido-NAD(+) is bound at residue Arg140. An ATP-binding site is contributed by Thr160. Glu165 serves as a coordination point for Mg(2+). The deamido-NAD(+) site is built by Lys173 and Asp180. Residues Lys189 and Thr211 each coordinate ATP. 260–261 (HK) contacts deamido-NAD(+).

This sequence belongs to the NAD synthetase family. Homodimer.

The catalysed reaction is deamido-NAD(+) + NH4(+) + ATP = AMP + diphosphate + NAD(+) + H(+). The protein operates within cofactor biosynthesis; NAD(+) biosynthesis; NAD(+) from deamido-NAD(+) (ammonia route): step 1/1. Catalyzes the ATP-dependent amidation of deamido-NAD to form NAD. Uses ammonia as a nitrogen source. The sequence is that of NH(3)-dependent NAD(+) synthetase from Escherichia fergusonii (strain ATCC 35469 / DSM 13698 / CCUG 18766 / IAM 14443 / JCM 21226 / LMG 7866 / NBRC 102419 / NCTC 12128 / CDC 0568-73).